Here is a 119-residue protein sequence, read N- to C-terminus: Membrane-anchored ubiquitin-fold protein 1 (119 aa).

Positions 9-75 (FEIKFRLPDG…LENNKTLSEC (67 aa)) constitute a Ubiquitin-like domain. Cys116 is subject to Cysteine methyl ester. Cys116 is lipidated: S-farnesyl cysteine. The propeptide at 117-119 (SIM) is removed in mature form.

The protein localises to the cell membrane. Its function is as follows. May serve as docking site to facilitate the association of other proteins to the plasma membrane. This Oryza sativa subsp. japonica (Rice) protein is Membrane-anchored ubiquitin-fold protein 1 (MUB1).